The chain runs to 962 residues: Villin-5 (962 aa).

Gelsolin-like repeat units follow at residues 29-79 (FKPV…DEAG), 150-190 (VRVK…QERA), 262-305 (GQTD…DQRK), 396-453 (LQVW…EDRA), 534-574 (MQAI…EDQE), and 636-677 (LKAT…KKKP). A disordered region spans residues 749 to 785 (KPKRRVPAYSSRSTVPDKSQPRSRSMTFSPDRARVRG). A compositionally biased stretch (polar residues) spans 758–776 (SSRSTVPDKSQPRSRSMTF). 2 positions are modified to phosphoserine: Ser777 and Ser787. Positions 845-862 (EKPTPTSQEPPTSPSSSE) are enriched in low complexity. Positions 845–917 (EKPTPTSQEP…LKTDSEDPVS (73 aa)) are disordered. Polar residues predominate over residues 863-875 (ATNQAEAPKSTSE). At Ser883 the chain carries Phosphoserine. Acidic residues predominate over residues 889–898 (SKEEEAEEES). The 66-residue stretch at 897–962 (ESSLPTFPYE…NKLKMSVNLF (66 aa)) folds into the HP domain.

The protein belongs to the villin/gelsolin family. Ubiquitous, but expressed preferentially in pollen and stamens.

The protein localises to the cytoplasm. It is found in the cytoskeleton. Functionally, major actin filament stabilizing factor and regulator of actin dynamics. Binds actin and actin filament bundles in a Ca(2+)-insensitive manner, but caps the barbed end of actin filaments and is able to sever them in a calcium-dependent manner. Required for the construction of actin collars in pollen tubes. Acts synergistically with VLN2 (AC O81644) to regulate polarized pollen tube growth. This is Villin-5 from Arabidopsis thaliana (Mouse-ear cress).